The sequence spans 610 residues: Protein Spindly-B (610 aa).

Positions 1-392 (MEESETVLKL…IDKVKDELSL (392 aa)) form a coiled coil. Residues 474-610 (TEAHGVSDAT…KPATAQCPQQ (137 aa)) are disordered. 2 stretches are compositionally biased toward basic and acidic residues: residues 493–511 (SDDKKLPKEDLSLSTKDQD) and 535–548 (RIMEDEKDTPDLNK). Over residues 549–561 (RNPNNCTITSIHP) the composition is skewed to polar residues. Residues 570-583 (SELKKVDEEQEKRK) are compositionally biased toward basic and acidic residues.

Belongs to the Spindly family.

Its subcellular location is the chromosome. It localises to the centromere. The protein resides in the kinetochore. Functionally, required for the localization of dynein and dynactin to the mitotic kintochore. Dynein is believed to control the initial lateral interaction between the kinetochore and spindle microtubules and to facilitate the subsequent formation of end-on kinetochore-microtubule attachments mediated by the NDC80 complex. The polypeptide is Protein Spindly-B (spdl1-b) (Xenopus laevis (African clawed frog)).